We begin with the raw amino-acid sequence, 282 residues long: Putative phosphatase in upp 3'region (282 aa).

The Nucleophile role is filled by aspartate 17. Aspartate 17 is a binding site for Mg(2+). Leucine 18 provides a ligand contact to phosphate. Position 19 (aspartate 19) interacts with Mg(2+). Phosphate is bound by residues 53–54 (TG) and lysine 211. Aspartate 234 and serine 235 together coordinate Mg(2+). Asparagine 237 contacts phosphate.

The protein belongs to the HAD-like hydrolase superfamily. Cof family. The cofactor is Mg(2+).

This Metamycoplasma hominis (Mycoplasma hominis) protein is Putative phosphatase in upp 3'region.